A 391-amino-acid chain; its full sequence is Terminal nucleotidyltransferase 5C (391 aa).

This sequence belongs to the TENT family. Interacts with BCCIP and PABPC1; the interaction has no effect on TENT5C poly(A) polymerase function. Interacts with PLK4; this interaction leads to the TENT5C recruitment into the centrosome.

It localises to the nucleus. The protein resides in the cytoplasm. It is found in the cytoskeleton. Its subcellular location is the microtubule organizing center. The protein localises to the centrosome. The catalysed reaction is RNA(n) + ATP = RNA(n)-3'-adenine ribonucleotide + diphosphate. In terms of biological role, catalyzes the transfer of one adenosine molecule from an ATP to an mRNA poly(A) tail bearing a 3'-OH terminal group and enhances mRNA stability and gene expression. Can also elongate RNA oligos ending with uridine molecule, provided that the sequence is adenosine-rich. Mainly targets mRNAs encoding endoplasmic reticulum-targeted protein. In Rattus norvegicus (Rat), this protein is Terminal nucleotidyltransferase 5C.